The following is a 104-amino-acid chain: L-rhamnose mutarotase (104 aa).

Tyrosine 18 contributes to the substrate binding site. Histidine 22 serves as the catalytic Proton donor. Substrate-binding positions include tyrosine 41 and 76–77 (WW).

It belongs to the rhamnose mutarotase family. In terms of assembly, homodimer.

It is found in the cytoplasm. The catalysed reaction is alpha-L-rhamnose = beta-L-rhamnose. It participates in carbohydrate metabolism; L-rhamnose metabolism. Involved in the anomeric conversion of L-rhamnose. The sequence is that of L-rhamnose mutarotase from Shouchella clausii (strain KSM-K16) (Alkalihalobacillus clausii).